We begin with the raw amino-acid sequence, 218 residues long: Thiamine-phosphate synthase (218 aa).

Residues 43-47 (QLRMK) and N75 contribute to the 4-amino-2-methyl-5-(diphosphooxymethyl)pyrimidine site. 2 residues coordinate Mg(2+): D76 and D95. T114 contacts 4-amino-2-methyl-5-(diphosphooxymethyl)pyrimidine. 140 to 142 (TST) lines the 2-[(2R,5Z)-2-carboxy-4-methylthiazol-5(2H)-ylidene]ethyl phosphate pocket. Residue K143 coordinates 4-amino-2-methyl-5-(diphosphooxymethyl)pyrimidine. Residues G171 and 191-192 (VS) contribute to the 2-[(2R,5Z)-2-carboxy-4-methylthiazol-5(2H)-ylidene]ethyl phosphate site.

It belongs to the thiamine-phosphate synthase family. Mg(2+) serves as cofactor.

It carries out the reaction 2-[(2R,5Z)-2-carboxy-4-methylthiazol-5(2H)-ylidene]ethyl phosphate + 4-amino-2-methyl-5-(diphosphooxymethyl)pyrimidine + 2 H(+) = thiamine phosphate + CO2 + diphosphate. The enzyme catalyses 2-(2-carboxy-4-methylthiazol-5-yl)ethyl phosphate + 4-amino-2-methyl-5-(diphosphooxymethyl)pyrimidine + 2 H(+) = thiamine phosphate + CO2 + diphosphate. It catalyses the reaction 4-methyl-5-(2-phosphooxyethyl)-thiazole + 4-amino-2-methyl-5-(diphosphooxymethyl)pyrimidine + H(+) = thiamine phosphate + diphosphate. It participates in cofactor biosynthesis; thiamine diphosphate biosynthesis; thiamine phosphate from 4-amino-2-methyl-5-diphosphomethylpyrimidine and 4-methyl-5-(2-phosphoethyl)-thiazole: step 1/1. In terms of biological role, condenses 4-methyl-5-(beta-hydroxyethyl)thiazole monophosphate (THZ-P) and 2-methyl-4-amino-5-hydroxymethyl pyrimidine pyrophosphate (HMP-PP) to form thiamine monophosphate (TMP). This Myxococcus xanthus (strain DK1622) protein is Thiamine-phosphate synthase.